The primary structure comprises 75 residues: Small ribosomal subunit protein bS18 (75 aa).

It belongs to the bacterial ribosomal protein bS18 family. Part of the 30S ribosomal subunit. Forms a tight heterodimer with protein bS6.

In terms of biological role, binds as a heterodimer with protein bS6 to the central domain of the 16S rRNA, where it helps stabilize the platform of the 30S subunit. In Wigglesworthia glossinidia brevipalpis, this protein is Small ribosomal subunit protein bS18.